The primary structure comprises 124 residues: T cell receptor beta variable 13 (124 aa).

Residues 1 to 31 (MLSPDLPDSAWNTRLLCRVMLCLLGAGSVAA) form the signal peptide. The 93-residue stretch at 32 to 124 (GVIQSPRHLI…SALYFCASSL (93 aa)) folds into the Ig-like domain. The cysteines at positions 52 and 120 are disulfide-linked. Asn106 carries N-linked (GlcNAc...) asparagine glycosylation.

In terms of assembly, alpha-beta TR is a heterodimer composed of an alpha and beta chain; disulfide-linked. The alpha-beta TR is associated with the transmembrane signaling CD3 coreceptor proteins to form the TR-CD3 (TcR or TCR). The assembly of alpha-beta TR heterodimers with CD3 occurs in the endoplasmic reticulum where a single alpha-beta TR heterodimer associates with one CD3D-CD3E heterodimer, one CD3G-CD3E heterodimer and one CD247 homodimer forming a stable octameric structure. CD3D-CD3E and CD3G-CD3E heterodimers preferentially associate with TR alpha and TR beta chains, respectively. The association of the CD247 homodimer is the last step of TcR assembly in the endoplasmic reticulum and is required for transport to the cell surface.

It is found in the cell membrane. V region of the variable domain of T cell receptor (TR) beta chain that participates in the antigen recognition. Alpha-beta T cell receptors are antigen specific receptors which are essential to the immune response and are present on the cell surface of T lymphocytes. Recognize peptide-major histocompatibility (MH) (pMH) complexes that are displayed by antigen presenting cells (APC), a prerequisite for efficient T cell adaptive immunity against pathogens. Binding of alpha-beta TR to pMH complex initiates TR-CD3 clustering on the cell surface and intracellular activation of LCK that phosphorylates the ITAM motifs of CD3G, CD3D, CD3E and CD247 enabling the recruitment of ZAP70. In turn ZAP70 phosphorylates LAT, which recruits numerous signaling molecules to form the LAT signalosome. The LAT signalosome propagates signal branching to three major signaling pathways, the calcium, the mitogen-activated protein kinase (MAPK) kinase and the nuclear factor NF-kappa-B (NF-kB) pathways, leading to the mobilization of transcription factors that are critical for gene expression and essential for T cell growth and differentiation. The T cell repertoire is generated in the thymus, by V-(D)-J rearrangement. This repertoire is then shaped by intrathymic selection events to generate a peripheral T cell pool of self-MH restricted, non-autoaggressive T cells. Post-thymic interaction of alpha-beta TR with the pMH complexes shapes TR structural and functional avidity. The protein is T cell receptor beta variable 13 of Homo sapiens (Human).